The chain runs to 234 residues: Orotidine 5'-phosphate decarboxylase (234 aa).

Substrate-binding positions include aspartate 10, lysine 32, 59–68 (DLKLHDIPTT), threonine 122, arginine 184, glutamine 193, glycine 213, and arginine 214. Lysine 61 serves as the catalytic Proton donor.

The protein belongs to the OMP decarboxylase family. Type 1 subfamily. As to quaternary structure, homodimer.

The catalysed reaction is orotidine 5'-phosphate + H(+) = UMP + CO2. It participates in pyrimidine metabolism; UMP biosynthesis via de novo pathway; UMP from orotate: step 2/2. In terms of biological role, catalyzes the decarboxylation of orotidine 5'-monophosphate (OMP) to uridine 5'-monophosphate (UMP). This is Orotidine 5'-phosphate decarboxylase from Bacillus pumilus (strain SAFR-032).